We begin with the raw amino-acid sequence, 558 residues long: 2-isopropylmalate synthase (558 aa).

The Pyruvate carboxyltransferase domain occupies 31–306; the sequence is PIWCAVDLRD…DPGIDFSNID (276 aa). Positions 40, 245, 247, and 281 each coordinate Mg(2+). Positions 440–558 are regulatory domain; sequence AGSPYSFLEH…LCAANHLSDK (119 aa).

This sequence belongs to the alpha-IPM synthase/homocitrate synthase family. LeuA type 2 subfamily. As to quaternary structure, homodimer. Mg(2+) serves as cofactor.

It localises to the cytoplasm. It catalyses the reaction 3-methyl-2-oxobutanoate + acetyl-CoA + H2O = (2S)-2-isopropylmalate + CoA + H(+). It functions in the pathway amino-acid biosynthesis; L-leucine biosynthesis; L-leucine from 3-methyl-2-oxobutanoate: step 1/4. Catalyzes the condensation of the acetyl group of acetyl-CoA with 3-methyl-2-oxobutanoate (2-ketoisovalerate) to form 3-carboxy-3-hydroxy-4-methylpentanoate (2-isopropylmalate). The polypeptide is 2-isopropylmalate synthase (Rhodospirillum rubrum (strain ATCC 11170 / ATH 1.1.1 / DSM 467 / LMG 4362 / NCIMB 8255 / S1)).